We begin with the raw amino-acid sequence, 247 residues long: Terpene cyclase ausL (247 aa).

6 consecutive transmembrane segments (helical) span residues 49 to 69 (AIAV…AWIY), 75 to 95 (HWQG…AATL), 114 to 134 (LVLL…CLAL), 138 to 158 (GALG…SGAV), 171 to 191 (SLVI…KLCI), and 206 to 226 (PMCW…PVLY).

The protein belongs to the paxB family.

The protein resides in the membrane. Its pathway is secondary metabolite biosynthesis; terpenoid biosynthesis. Its function is as follows. Terpene cyclase; part of the gene cluster that mediates the biosynthesis of calidodehydroaustin, a fungal meroterpenoid. The first step of the pathway is the synthesis of 3,5-dimethylorsellinic acid by the polyketide synthase ausA. 3,5-dimethylorsellinic acid is then prenylated by the polyprenyl transferase ausN. Further epoxidation by the FAD-dependent monooxygenase ausM and cyclization by the probable terpene cyclase ausL lead to the formation of protoaustinoid A. Protoaustinoid A is then oxidized to spiro-lactone preaustinoid A3 by the combined action of the FAD-binding monooxygenases ausB and ausC, and the dioxygenase ausE. Acid-catalyzed keto-rearrangement and ring contraction of the tetraketide portion of preaustinoid A3 by ausJ lead to the formation of preaustinoid A4. The aldo-keto reductase ausK, with the help of ausH, is involved in the next step by transforming preaustinoid A4 into isoaustinone which is in turn hydroxylated by the P450 monooxygenase ausI to form austinolide. The cytochrome P450 monooxygenase ausG modifies austinolide to austinol. Austinol is further acetylated to austin by the O-acetyltransferase ausP, which spontaneously changes to dehydroaustin. The cytochrome P450 monooxygenase ausR then converts dehydroaustin is into 7-dehydrodehydroaustin. The hydroxylation catalyzed by ausR permits the O-acetyltransferase ausQ to add an additional acetyl group to the molecule, leading to the formation of acetoxydehydroaustin. The short chain dehydrogenase ausT catalyzes the reduction of the double bond present between carbon atoms 1 and 2 to convert 7-dehydrodehydroaustin into 1,2-dihydro-7-hydroxydehydroaustin. AusQ catalyzes not only an acetylation reaction but also the addition of the PKS ausV diketide product to 1,2-dihydro-7-hydroxydehydroaustin, forming precalidodehydroaustin. Finally, the iron/alpha-ketoglutarate-dependent dioxygenase converts precalidodehydroaustin into calidodehydroaustin. The chain is Terpene cyclase ausL from Aspergillus calidoustus.